Here is a 498-residue protein sequence, read N- to C-terminus: UDP-N-acetylmuramoyl-L-alanyl-D-glutamate--2,6-diaminopimelate ligase (498 aa).

Ser-29 serves as a coordination point for UDP-N-acetyl-alpha-D-muramoyl-L-alanyl-D-glutamate. An ATP-binding site is contributed by 120-126 (GTDGKTS). UDP-N-acetyl-alpha-D-muramoyl-L-alanyl-D-glutamate-binding positions include 162–163 (TT), Ser-189, Gln-195, and Arg-197. N6-carboxylysine is present on Lys-229. Residues Arg-392, 416-419 (DNPR), Gly-466, and Glu-470 contribute to the meso-2,6-diaminopimelate site. Positions 416-419 (DNPR) match the Meso-diaminopimelate recognition motif motif.

It belongs to the MurCDEF family. MurE subfamily. It depends on Mg(2+) as a cofactor. In terms of processing, carboxylation is probably crucial for Mg(2+) binding and, consequently, for the gamma-phosphate positioning of ATP.

It is found in the cytoplasm. It catalyses the reaction UDP-N-acetyl-alpha-D-muramoyl-L-alanyl-D-glutamate + meso-2,6-diaminopimelate + ATP = UDP-N-acetyl-alpha-D-muramoyl-L-alanyl-gamma-D-glutamyl-meso-2,6-diaminopimelate + ADP + phosphate + H(+). It participates in cell wall biogenesis; peptidoglycan biosynthesis. Catalyzes the addition of meso-diaminopimelic acid to the nucleotide precursor UDP-N-acetylmuramoyl-L-alanyl-D-glutamate (UMAG) in the biosynthesis of bacterial cell-wall peptidoglycan. This chain is UDP-N-acetylmuramoyl-L-alanyl-D-glutamate--2,6-diaminopimelate ligase, found in Alkalilimnicola ehrlichii (strain ATCC BAA-1101 / DSM 17681 / MLHE-1).